Here is a 461-residue protein sequence, read N- to C-terminus: Complement C1r subcomponent-like protein (461 aa).

A signal peptide spans 1–22; sequence MCWLLLWGILHTCPTQASVLLA. The CUB domain occupies 23–139; it reads QQFPQQLTSP…KGFLALYQAA (117 aa). Intrachain disulfides connect Cys-71–Cys-89 and Cys-164–Cys-197. Residues 138–199 enclose the Sushi domain; the sequence is AAVSQPNGDA…RGEEVPECVP (62 aa). In terms of domain architecture, Peptidase S1 spans 214 to 453; sequence TFGSSRAKPG…YVDWIKGVIE (240 aa). The active-site Charge relay system is His-252. Asn-265 is a glycosylation site (N-linked (GlcNAc...) asparagine). Asp-308 functions as the Charge relay system in the catalytic mechanism. Asn-332 carries N-linked (GlcNAc...) asparagine glycosylation. 2 disulfides stabilise this stretch: Cys-371/Cys-390 and Cys-401/Cys-431. Ser-405 acts as the Charge relay system in catalysis.

This sequence belongs to the peptidase S1 family.

It localises to the secreted. Mediates the proteolytic cleavage of HP/haptoglobin in the endoplasmic reticulum. The chain is Complement C1r subcomponent-like protein (C1rl) from Rattus norvegicus (Rat).